The primary structure comprises 2067 residues: MVLDDLPNFEDIYTSLCSSTMGDSEVEFDSGLEDDDTKGDSILEDSTIFVAFKGNIDDKDFKWKLDAILKNVPNLLHMESSKLKVQKVEPWNSVRVTFNIPREAAERLWILAQSNNQQLRDLGILSVQIEGEGAINLALGQNRSQDVRMNGPVASGNSVRMEAGFPMASGPGLIRMTSPAAVMTPQGGNMSSSMMAPGPNPELQPRTPRPASQSDAMDPLLSGLHIQQQSHPSGSLPPAHHSMQPVPVNRQMNPANFPQLQQQQQQQQQQQQQQQQQQQQQQQQQQQQQQLQTRPLQQHQQQPQGIRPQFTAPTQVPVPPGWNQLPSGALQPPPAQGSLGTMTTNQGWKKAPLPSPMQAQLQARPSLATVQTPSHPPPPYPFGSQQASQAHTNFPQMSNPGQFTAPQMKGLQGGPSRVPTPLQQPHLTNKSPASSPSSFQQGSPASSPTVNQTQQQMGPRPPQNNPLSQGFQQPVSSPGRNPMVQQGNVPPNFMVMQQQPPNQGPQSLHPGLGGMPKRLPPGFSAGQANPNFMQGQVPSTTAATPGNSGALQLQANQNVQHAGGQGAGPPQNQMQVSHGPPNMMQPSLMGIHGNINNQQAGSSGVPQVTLGNMQGQPQQGPPSQLMGMHQQIVPSQGQMAQQQGTLNPQNPMILSRAQLMPQGQMMVNAQNQNLGPSPQRMTPPKQMLPQQGPQMMAPHNQMMGPQGQVLLQQNPMIEQIMTNQMQGNKAQFNSQNQSNVMPGPAQIMRGPTPNMQGNMVQFTGQMSGQMLPQQGPVNNSPSQVMGIQGQVLRPPGPSPHMAQQHTDPVTTANNDVNLSQMMPDVSMQQASMVPPHVQSMQGNSASGSHFSGHGVSFNAPFGGAPNGSQMSCGQNPGFPVNKDVTLTSPLLVNLLQSDISAGHFGVNNKQNNTNANKPKKKKPPRKKKNCHQDLNTPDNRPTGLEEVDQQSLPGEQGINLDTTGPKLPDFSNRPPGYPTQPVEQRPLPQMPPQLMQHVAPPPQPPQQQPQPQLPQQQQPPPPSQPQSQQQQQQQQMMMMLMMQQDPKSIRLPVSQNVHPPRGPLNPDSQRMPVQQSGNVPVMVGLQGPASVPPSPDKQRMPMSVNTPMGSNSRKMVYQENPQNSSSSPLGEMSSLPEASGSEVPSVAGGPNNMPSHLVVSQNQLMMTGPKPGPSPLSATQGATPQQPPVNSLPSSHGHHFPNVAAPTQTSRPKTPNRASPRPYYPQTPNNRPPSTEPSEISLSPERLNASIAGLFPPQINIPLPPRPNLNRGFDQQGLNPTTLKAIGQAPSNLTITNPPNFAAPQAHKLDSVVVNSGKQSNPGTTKRASPSNSRRSSPGSSRKTTPSPGRQNSKAPKLTLASQTSTTMLQNMELPRNVLVGPTPLANPPLPGSFPNNTGLNPQNPTVPVPAMGTVLEDNKESVNIPQDSDCQNAQGRKEQVNTELKVVPTQEAKMAVPEDQSKKDGQPLDPNKLPSVEENKNLMSPAMREAPTSLSQLLDNSGAPNVTIKPPGLTDLEVTPPVVSGEDLRKASVIPTLQDPPSKEPSTSLSSPHSSEPCSTLARSELSEVSSNAAPSIPPVMSRPVSSSSISTPLPPNQITVFVTSNPITTSSNTSAALPTHLQSALMSTVVTMPNVGNKVMVSEGQSAAQSNARPQFITPVFINSSSIIQVMKGSQPSTIPATPLTTNSGLMPPSVAVVGPLHIPQNIKFSSAPVTPNVPSSSPAPNIQTGRPLVLSSRATPVQLPSPPCTSSPVVAPNPSVQQVKELNPDEASPQTNTSADQSTLPPSQPTTVVSSLLTNSPGSSANRRSPVSSSKGKGKVDKIGQILLTKACKKVTGSLEKGEEQYGADGETEGPGLEITTPGLMGTEQCSTELDSKTPTPSAPTLLKMTSSPMAPSSTSTGPILPGGALPTSVRSIVTTLVPSELISTAPTTKGNHGGVTSEPLAGGLVEEKVGSHPELLPSIAPSQNLAPKETPATALQGSVARPELEANAAIASGQSCEPKEIVEKSKTLTSRRNSRTEEPTMASESVENGHRKRSSRPASASSSTKDITGAVQSKRRKSK.

The interval 1–932 (MVLDDLPNFE…PPRKKKNCHQ (932 aa)) is TBP/GTF2A-binding region. The CREBBP-binding region stretch occupies residues 1 to 1060 (MVLDDLPNFE…LPVSQNVHPP (1060 aa)). Positions 1–1314 (MVLDDLPNFE…QAHKLDSVVV (1314 aa)) are NCOA1-binding region. Arginine 95 is modified (asymmetric dimethylarginine). Disordered stretches follow at residues 181–253 (AVMT…RQMN) and 293–548 (TRPL…PGNS). Positions 293–304 (TRPLQQHQQQPQ) are enriched in low complexity. Composition is skewed to polar residues over residues 338 to 347 (SLGTMTTNQG), 357 to 372 (MQAQ…TVQT), 383 to 405 (GSQQ…QFTA), 421 to 457 (PLQQ…QQQM), 465 to 506 (NPLS…QGPQ), and 526 to 548 (GQAN…PGNS). The interval 777 to 931 (VNNSPSQVMG…KPPRKKKNCH (155 aa)) is NCOA6IP-binding region. Serine 888 bears the Phosphoserine mark. Residues 891–895 (LVNLL) carry the LXXLL motif 1 motif. 5 disordered regions span residues 903–1279 (HFGV…QGLN), 1313–1358 (VVNS…APKL), 1424–1481 (NIPQ…EENK), 1497–1581 (QLLD…IPPV), and 1769–1822 (LNPD…GKGK). Positions 907–916 (NNKQNNTNAN) are enriched in low complexity. Basic residues predominate over residues 917–929 (KPKKKKPPRKKKN). The span at 984–996 (QRPLPQMPPQLMQ) shows a compositional bias: low complexity. A compositionally biased stretch (pro residues) spans 999–1024 (APPPQPPQQQPQPQLPQQQQPPPPSQ). The segment covering 1025–1044 (PQSQQQQQQQQMMMMLMMQQ) has biased composition (low complexity). 2 positions are modified to asymmetric dimethylarginine: arginine 1050 and arginine 1061. A compositionally biased stretch (polar residues) spans 1066–1078 (PDSQRMPVQQSGN). Position 1099 is an asymmetric dimethylarginine (arginine 1099). Residues 1103 to 1123 (SVNTPMGSNSRKMVYQENPQN) show a composition bias toward polar residues. Residues 1124–1137 (SSSSPLGEMSSLPE) show a composition bias toward low complexity. Composition is skewed to polar residues over residues 1152–1165 (NMPS…NQLM), 1176–1194 (LSAT…SLPS), and 1205–1217 (APTQ…TPNR). The segment covering 1222–1235 (PYYPQTPNNRPPST) has biased composition (pro residues). The span at 1313 to 1324 (VVNSGKQSNPGT) shows a compositional bias: polar residues. A compositionally biased stretch (low complexity) spans 1326–1349 (KRASPSNSRRSSPGSSRKTTPSPG). A compositionally biased stretch (polar residues) spans 1424–1435 (NIPQDSDCQNAQ). Residues 1495-1499 (LSQLL) carry the LXXLL motif 2 motif. A compositionally biased stretch (low complexity) spans 1545–1562 (EPSTSLSSPHSSEPCSTL). The EP300/CRSP3-binding region stretch occupies residues 1644–2067 (SEGQSAAQSN…AVQSKRRKSK (424 aa)). A compositionally biased stretch (polar residues) spans 1775 to 1805 (SPQTNTSADQSTLPPSQPTTVVSSLLTNSPG). Positions 1806–1818 (SSANRRSPVSSSK) are enriched in low complexity. An N6-acetyllysine mark is found at lysine 1822 and lysine 1825. Disordered stretches follow at residues 1840 to 1911 (GSLE…LPGG) and 1957 to 2067 (VGSH…RKSK). The span at 1871–1883 (EQCSTELDSKTPT) shows a compositional bias: polar residues. The segment covering 1892–1904 (MTSSPMAPSSTST) has biased composition (low complexity). Over residues 2005 to 2014 (EPKEIVEKSK) the composition is skewed to basic and acidic residues. Residue serine 2022 is modified to Phosphoserine.

As to quaternary structure, monomer and homodimer. Interacts in vitro with the basal transcription factors GTF2A and TBP, suggesting an autonomous transactivation function. Interacts with NCOA1, CRSP3, RBM14, the histone acetyltransferase proteins EP300 and CREBBP, and with methyltransferase proteins NCOA6IP and PRMT2. Interacts with RBM39. Component of the MLL2/3 complex (also named ASCOM complex), at least composed of KMT2D/MLL2 or KMT2C/MLL3, ASH2L, RBBP5, WDR5, NCOA6, DPY30, KDM6A, PAXIP1/PTIP, PAGR1 and alpha- and beta-tubulin. Interacts with ZNF335; may enhance ligand-dependent transcriptional activation by nuclear hormone receptors. Post-translationally, phosphorylated. As to expression, widely expressed. High expression in testis and weak expression in small intestine.

Its subcellular location is the nucleus. Its function is as follows. Nuclear receptor coactivator that directly binds nuclear receptors and stimulates the transcriptional activities in a hormone-dependent fashion. Coactivates expression in an agonist- and AF2-dependent manner. Involved in the coactivation of different nuclear receptors, such as for steroids (GR and ERs), retinoids (RARs and RXRs), thyroid hormone (TRs), vitamin D3 (VDR) and prostanoids (PPARs). Probably functions as a general coactivator, rather than just a nuclear receptor coactivator. May also be involved in the coactivation of the NF-kappa-B pathway. May coactivate expression via a remodeling of chromatin and its interaction with histone acetyltransferase proteins. Involved in placental, cardiac, hepatic and embryonic development. This is Nuclear receptor coactivator 6 (Ncoa6) from Mus musculus (Mouse).